The chain runs to 56 residues: Small ribosomal subunit protein uS14 (56 aa).

Ser9 bears the Phosphoserine mark. Arg12 is subject to Omega-N-methylarginine. The Zn(2+) site is built by Cys21, Cys24, Cys39, and Cys42. Lys48 bears the N6-acetyllysine mark.

It belongs to the universal ribosomal protein uS14 family. As to quaternary structure, component of the 40S small ribosomal subunit. The cofactor is Zn(2+).

It localises to the cytoplasm. The protein localises to the cytosol. The protein resides in the rough endoplasmic reticulum. Component of the small ribosomal subunit. The ribosome is a large ribonucleoprotein complex responsible for the synthesis of proteins in the cell. The chain is Small ribosomal subunit protein uS14 (Rps29) from Mus musculus (Mouse).